We begin with the raw amino-acid sequence, 462 residues long: UDP-N-acetylmuramoylalanine--D-glutamate ligase (462 aa).

117–123 is a binding site for ATP; it reads GTNGKTT.

Belongs to the MurCDEF family.

Its subcellular location is the cytoplasm. It catalyses the reaction UDP-N-acetyl-alpha-D-muramoyl-L-alanine + D-glutamate + ATP = UDP-N-acetyl-alpha-D-muramoyl-L-alanyl-D-glutamate + ADP + phosphate + H(+). The protein operates within cell wall biogenesis; peptidoglycan biosynthesis. Functionally, cell wall formation. Catalyzes the addition of glutamate to the nucleotide precursor UDP-N-acetylmuramoyl-L-alanine (UMA). This chain is UDP-N-acetylmuramoylalanine--D-glutamate ligase, found in Parasynechococcus marenigrum (strain WH8102).